The following is a 197-amino-acid chain: 7-methyl-GTP pyrophosphatase (197 aa).

Aspartate 74 serves as the catalytic Proton acceptor.

Belongs to the Maf family. YceF subfamily. A divalent metal cation serves as cofactor.

Its subcellular location is the cytoplasm. It catalyses the reaction N(7)-methyl-GTP + H2O = N(7)-methyl-GMP + diphosphate + H(+). In terms of biological role, nucleoside triphosphate pyrophosphatase that hydrolyzes 7-methyl-GTP (m(7)GTP). May have a dual role in cell division arrest and in preventing the incorporation of modified nucleotides into cellular nucleic acids. This chain is 7-methyl-GTP pyrophosphatase, found in Saccharophagus degradans (strain 2-40 / ATCC 43961 / DSM 17024).